Consider the following 275-residue polypeptide: Exosome complex component Rrp42 (275 aa).

The protein belongs to the RNase PH family. Rrp42 subfamily. Component of the archaeal exosome complex. Forms a hexameric ring-like arrangement composed of 3 Rrp41-Rrp42 heterodimers. The hexameric ring associates with a trimer of Rrp4 and/or Csl4 subunits.

Its subcellular location is the cytoplasm. Its function is as follows. Non-catalytic component of the exosome, which is a complex involved in RNA degradation. Contributes to the structuring of the Rrp41 active site. The chain is Exosome complex component Rrp42 from Saccharolobus islandicus (strain L.S.2.15 / Lassen #1) (Sulfolobus islandicus).